Here is a 417-residue protein sequence, read N- to C-terminus: MFSKQDQIQGYDDALLSAMNAEEQRQEDHIELIASENYTSKRVMQAQGSGLTNKYAEGYPGKRYYGGCEHVDKVEQLAIERARQLFGADYANVQPHSGSQANAAVYLALLQAGDTVLGMSLAHGGHLTHGAKVSFSGKLYNAVQYGIDTATGLIDYDEVERIAVECQPKMIIAGFSAYSKTLDFPRFRAIADKVGAYLFVDMAHVAGLVAAGLYPNPLPYADVVTTTTHKTLRGPRGGLILARANEELEKKFNSAVFPGGQGGPLMHVIAAKAVCFKEAMEPGFKAYQQQVIDNAQAMAQVFIDRGFDVVSGGTDNHLFLVSLIRQGLTGKDADAALGRAHITVNKNSVPNDPQSPFVTSGLRIGTPAVTTRGFKVTQCVELAGWICDILDNLGDADVEADVASQVAALCADFPVYR.

Residues leucine 121 and 125–127 (GHL) each bind (6S)-5,6,7,8-tetrahydrofolate. Lysine 230 is subject to N6-(pyridoxal phosphate)lysine. 355-357 (SPF) provides a ligand contact to (6S)-5,6,7,8-tetrahydrofolate.

This sequence belongs to the SHMT family. Homodimer. The cofactor is pyridoxal 5'-phosphate.

Its subcellular location is the cytoplasm. It catalyses the reaction (6R)-5,10-methylene-5,6,7,8-tetrahydrofolate + glycine + H2O = (6S)-5,6,7,8-tetrahydrofolate + L-serine. It functions in the pathway one-carbon metabolism; tetrahydrofolate interconversion. It participates in amino-acid biosynthesis; glycine biosynthesis; glycine from L-serine: step 1/1. Functionally, catalyzes the reversible interconversion of serine and glycine with tetrahydrofolate (THF) serving as the one-carbon carrier. This reaction serves as the major source of one-carbon groups required for the biosynthesis of purines, thymidylate, methionine, and other important biomolecules. Also exhibits THF-independent aldolase activity toward beta-hydroxyamino acids, producing glycine and aldehydes, via a retro-aldol mechanism. The protein is Serine hydroxymethyltransferase 2 of Pseudomonas syringae pv. syringae (strain B728a).